We begin with the raw amino-acid sequence, 487 residues long: MGVIGIQLVVTMVMASVMQKIIPHYSLARWLLCNGSLRWYQHPSEEELRILAGKQQKGKSKKDRKYNGHIENKPLTIPKDIDLHLETKSVTEVDTLALHYFPEYQWLVDFTVAATIVYLVTEVYYSFMKPTQEMNISLVWCLLVLSFAIKVLFSLTTHYFKVEDGGERSVCVTFGFFFFVKAMAVLIVTENYLEFGLETGFTNFSDSAMQFLEKQGLESQGPVSKLTFKFFLAVFCSLIGAFLTFPGLRLAQMHLDALNMATEKITQTLLHINFLAPLFMVLLWVKPITKDYIMNPPLGRESVPLMTEATFDTLRLWLIILLCVLRLAMMRSHLQAYLNLAQKCVDQMKKEAGRISTVELQKMVARVFYYLCVIALQYVAPLVMLLHMTLLLKTLGNHSWGIYPEAAFPLPVDNNLPANSAYPELPSPDGKMKVTVTQITVALSSLKNIFTPLLFRGLLSFLTWWIAACLFSTSLFGLFYHQYLTVA.

Residue Asn34 is glycosylated (N-linked (GlcNAc...) asparagine). Residues 107 to 127 form a helical membrane-spanning segment; the sequence is LVDFTVAATIVYLVTEVYYSF. Asn135 carries N-linked (GlcNAc...) asparagine glycosylation. 2 helical membrane-spanning segments follow: residues 136–156 and 169–189; these read ISLVWCLLVLSFAIKVLFSLT and SVCVTFGFFFFVKAMAVLIVT. N-linked (GlcNAc...) asparagine glycosylation occurs at Asn203. A run of 5 helical transmembrane segments spans residues 228–248, 265–285, 305–325, 367–387, and 459–479; these read FKFFLAVFCSLIGAFLTFPGL, ITQTLLHINFLAPLFMVLLWV, LMTEATFDTLRLWLIILLCVL, VFYYLCVIALQYVAPLVMLLH, and LSFLTWWIAACLFSTSLFGLF.

The protein belongs to the TMEM161 family.

The protein localises to the cell membrane. In terms of biological role, essential for maintaining normal cardiac rhythm in the developing heart and for neonatal survival. Inhibits potassium and calcium currents in the cardiomyocytes, this assists in timely action potential repolarization and thereby maintains normal cardiac rhythm. The chain is Transmembrane protein 161B (Tmem161b) from Mus musculus (Mouse).